We begin with the raw amino-acid sequence, 431 residues long: MSEIQSVIAREVIDSRGNPTVEAEVTTLSGTGRAAVPSGASTGEHEAVELRDGDKKRFLGKGVLTAVKNIETVLGPAVLGMDALDQAELDKVLIQADGSPNKSKLGANAILAVSMAAARAAADTVDLPLWRYLGGAAARVLPTPLMNILNGGVHADNGLEIQEFMIVPYGAESFAEALRTGAEIFHTLRGLLKKDGMVTAVGDEGGFAPRLPSNRAALEYVVRAIEAAGHRPGEDVGVALDSALSEFYDAKTERYTFDKQQKTREEIVAIYDELAKAFPIVSIEDGVAENDEKGWRLLTERLGKKVQLVGDDLFVTNPARLAKGIEDGLANAILIKLNQIGTVTETLECIRQAAEGGYRSIISHRSGETEDTFIADLAVATNAGQIKTGSASRSDRVAKYNQLLRISYALGDGQVFAGRAPFRRPGAKRSS.

Q162 lines the (2R)-2-phosphoglycerate pocket. The active-site Proton donor is E204. Positions 241, 284, and 311 each coordinate Mg(2+). K336, R365, S366, and K387 together coordinate (2R)-2-phosphoglycerate. K336 (proton acceptor) is an active-site residue.

The protein belongs to the enolase family. The cofactor is Mg(2+).

It is found in the cytoplasm. It localises to the secreted. The protein localises to the cell surface. It catalyses the reaction (2R)-2-phosphoglycerate = phosphoenolpyruvate + H2O. The protein operates within carbohydrate degradation; glycolysis; pyruvate from D-glyceraldehyde 3-phosphate: step 4/5. Functionally, catalyzes the reversible conversion of 2-phosphoglycerate (2-PG) into phosphoenolpyruvate (PEP). It is essential for the degradation of carbohydrates via glycolysis. This is Enolase from Sorangium cellulosum (strain So ce56) (Polyangium cellulosum (strain So ce56)).